Here is a 232-residue protein sequence, read N- to C-terminus: Ubiquinone biosynthesis O-methyltransferase (232 aa).

S-adenosyl-L-methionine contacts are provided by R36, G55, D76, and M120.

Belongs to the methyltransferase superfamily. UbiG/COQ3 family.

It carries out the reaction a 3-demethylubiquinol + S-adenosyl-L-methionine = a ubiquinol + S-adenosyl-L-homocysteine + H(+). It catalyses the reaction a 3-(all-trans-polyprenyl)benzene-1,2-diol + S-adenosyl-L-methionine = a 2-methoxy-6-(all-trans-polyprenyl)phenol + S-adenosyl-L-homocysteine + H(+). It participates in cofactor biosynthesis; ubiquinone biosynthesis. In terms of biological role, O-methyltransferase that catalyzes the 2 O-methylation steps in the ubiquinone biosynthetic pathway. This Thiobacillus denitrificans (strain ATCC 25259 / T1) protein is Ubiquinone biosynthesis O-methyltransferase.